The following is a 1218-amino-acid chain: ATP-dependent helicase/deoxyribonuclease subunit B (1218 aa).

One can recognise a UvrD-like helicase ATP-binding domain in the interval 1–279; sequence MRFIVGRAGT…VFLTETHRFE (279 aa). Residue 6-13 coordinates ATP; that stretch reads GRAGTGKS. The UvrD-like helicase C-terminal domain maps to 281 to 588; it reads AGLKHLERFY…LVGSLDRSRN (308 aa). A [4Fe-4S] cluster-binding site is contributed by C786. The interval 987 to 1006 is disordered; it reads LAEGSKGSEGSEGSEDSEDS. The [4Fe-4S] cluster site is built by C1126, C1129, and C1135. A compositionally biased stretch (polar residues) spans 1160-1169; the sequence is RVQSQDSEQY. The disordered stretch occupies residues 1160 to 1218; that stretch reads RVQSQDSEQYPEQHPPTSVPGETSRRALQKDGGNSPRGQELIWLGEDEAGAGKEDDGHE. The segment covering 1209 to 1218 has biased composition (basic and acidic residues); the sequence is GAGKEDDGHE.

This sequence belongs to the helicase family. AddB/RexB type 1 subfamily. As to quaternary structure, heterodimer of AddA and AddB. Requires Mg(2+) as cofactor. [4Fe-4S] cluster serves as cofactor.

In terms of biological role, the heterodimer acts as both an ATP-dependent DNA helicase and an ATP-dependent, dual-direction single-stranded exonuclease. Recognizes the chi site generating a DNA molecule suitable for the initiation of homologous recombination. The AddB subunit has 5' -&gt; 3' nuclease activity but not helicase activity. The chain is ATP-dependent helicase/deoxyribonuclease subunit B from Desulfitobacterium hafniense (strain DSM 10664 / DCB-2).